A 194-amino-acid polypeptide reads, in one-letter code: Imidazole glycerol phosphate synthase subunit HisH (194 aa).

One can recognise a Glutamine amidotransferase type-1 domain in the interval M1 to L194. C75 functions as the Nucleophile in the catalytic mechanism. Residues H175 and E177 contribute to the active site.

In terms of assembly, heterodimer of HisH and HisF.

Its subcellular location is the cytoplasm. The enzyme catalyses 5-[(5-phospho-1-deoxy-D-ribulos-1-ylimino)methylamino]-1-(5-phospho-beta-D-ribosyl)imidazole-4-carboxamide + L-glutamine = D-erythro-1-(imidazol-4-yl)glycerol 3-phosphate + 5-amino-1-(5-phospho-beta-D-ribosyl)imidazole-4-carboxamide + L-glutamate + H(+). It carries out the reaction L-glutamine + H2O = L-glutamate + NH4(+). The protein operates within amino-acid biosynthesis; L-histidine biosynthesis; L-histidine from 5-phospho-alpha-D-ribose 1-diphosphate: step 5/9. Functionally, IGPS catalyzes the conversion of PRFAR and glutamine to IGP, AICAR and glutamate. The HisH subunit catalyzes the hydrolysis of glutamine to glutamate and ammonia as part of the synthesis of IGP and AICAR. The resulting ammonia molecule is channeled to the active site of HisF. The sequence is that of Imidazole glycerol phosphate synthase subunit HisH from Mannheimia succiniciproducens (strain KCTC 0769BP / MBEL55E).